Here is a 391-residue protein sequence, read N- to C-terminus: Ferrochelatase (391 aa).

Residues His196 and Glu281 each coordinate Fe cation.

It belongs to the ferrochelatase family.

The protein resides in the cytoplasm. The enzyme catalyses heme b + 2 H(+) = protoporphyrin IX + Fe(2+). The protein operates within porphyrin-containing compound metabolism; protoheme biosynthesis; protoheme from protoporphyrin-IX: step 1/1. Catalyzes the ferrous insertion into protoporphyrin IX. The protein is Ferrochelatase of Synechococcus sp. (strain WH7803).